The following is a 209-amino-acid chain: Thymidine kinase (209 aa).

Residues 16 to 23 and 90 to 93 each bind ATP; these read GPMFAGKT and DESQ. Glu-91 serves as the catalytic Proton acceptor.

Belongs to the thymidine kinase family. In terms of assembly, homotetramer.

It localises to the cytoplasm. The enzyme catalyses thymidine + ATP = dTMP + ADP + H(+). In Aster yellows witches'-broom phytoplasma (strain AYWB), this protein is Thymidine kinase.